Consider the following 240-residue polypeptide: MSKAGGNKGGSRTGGRGGAGSSNLHVRVKKKAGTTKESSRRWLERHLNDPYVHKSRQDGYRSRAAYKLIEINDRYNLLKKGQKIIDLGAAPGGWSQIAARIVGSTDENPQVVGIDYLHVDPLPGVILLEMDFLDDEAPQKLMDALGDKPDLVISDMAAPTTGHRRTDHLRTVHLCEVAADFAVSVLKPGGHFLTKTFQGGTENELLALLKQKFRSVHHVKPPASRAESVELYLLARDFKG.

Positions 1 to 20 (MSKAGGNKGGSRTGGRGGAG) are enriched in gly residues. The disordered stretch occupies residues 1–40 (MSKAGGNKGGSRTGGRGGAGSSNLHVRVKKKAGTTKESSR). S-adenosyl-L-methionine contacts are provided by G92, W94, D115, D131, and D155. K195 functions as the Proton acceptor in the catalytic mechanism.

Belongs to the class I-like SAM-binding methyltransferase superfamily. RNA methyltransferase RlmE family.

The protein localises to the cytoplasm. It carries out the reaction uridine(2552) in 23S rRNA + S-adenosyl-L-methionine = 2'-O-methyluridine(2552) in 23S rRNA + S-adenosyl-L-homocysteine + H(+). Its function is as follows. Specifically methylates the uridine in position 2552 of 23S rRNA at the 2'-O position of the ribose in the fully assembled 50S ribosomal subunit. The protein is Ribosomal RNA large subunit methyltransferase E of Brucella ovis (strain ATCC 25840 / 63/290 / NCTC 10512).